A 693-amino-acid polypeptide reads, in one-letter code: Glycine--tRNA ligase beta subunit (693 aa).

The protein belongs to the class-II aminoacyl-tRNA synthetase family. In terms of assembly, tetramer of two alpha and two beta subunits.

It is found in the cytoplasm. It carries out the reaction tRNA(Gly) + glycine + ATP = glycyl-tRNA(Gly) + AMP + diphosphate. The protein is Glycine--tRNA ligase beta subunit of Vibrio campbellii (strain ATCC BAA-1116).